The sequence spans 908 residues: Transcriptional repressor ILP1 (908 aa).

Disordered stretches follow at residues 1-113 (MGSN…PQAG) and 238-277 (VGPR…EEDK). Positions 25–47 (ATPSSKPTSTLSSSKPKTLSASA) are enriched in low complexity. A coiled-coil region spans residues 426–453 (MQNKGSLIEEIEDQMKELNEKHALSILE). Residues 513-530 (EFGRDENLQKRREVEQRA) show a composition bias toward basic and acidic residues. The tract at residues 513–574 (EFGRDENLQK…ESDTETSAYK (62 aa)) is disordered.

It belongs to the GCF family. Interacts with STIPL1/NTR1.

The protein localises to the nucleus. Transcriptional repressor regulating endoreduplication through control of A-type cyclins expression. Does not bind to promoter sequences (in vitro) and may act by interacting with tissue-specific transcription factors. Enhances the endocycle in endoreduplicating cells in seedlings. Required for efficient splicing. The protein is Transcriptional repressor ILP1 of Arabidopsis thaliana (Mouse-ear cress).